The following is a 2280-amino-acid chain: Genome polyprotein (2280 aa).

The region spanning 454-608 (ETQANNIRST…EEWKKRNPGK (155 aa)) is the SF3 helicase domain. 480–487 (GAPGIGKT) lines the ATP pocket. Tyr965 is modified (O-(5'-phospho-RNA)-tyrosine). The region spanning 1054–1202 (APTAIVEFTQ…TKVAQRVVKE (149 aa)) is the Peptidase C24 domain. Residues His1084, Glu1105, and Cys1169 each act as for 3CLpro activity in the active site. Residues 1442 to 1567 (GVLYCLDYSK…SVCPATASIF (126 aa)) form the RdRp catalytic domain. A disordered region spans residues 1722–1746 (GNGSNPEPKQSNNPMVVDPPGTTGP). The span at 1723–1735 (NGSNPEPKQSNNP) shows a compositional bias: polar residues.

In terms of assembly, homodimer. Homomultimer. Specific enzymatic cleavages in vivo yield mature proteins. Pro-Pol is first autocatalytically cleaved, then processes the whole polyprotein. Post-translationally, VPg is uridylylated by the polymerase and is covalently attached to the 5'-end of the polyadenylated genomic and subgenomic RNAs. This uridylylated form acts as a nucleotide-peptide primer for the polymerase.

The protein resides in the virion. It localises to the host cytoplasm. It catalyses the reaction a ribonucleoside 5'-triphosphate + H2O = a ribonucleoside 5'-diphosphate + phosphate + H(+). The enzyme catalyses RNA(n) + a ribonucleoside 5'-triphosphate = RNA(n+1) + diphosphate. The catalysed reaction is Endopeptidase with a preference for cleavage when the P1 position is occupied by Glu-|-Xaa and the P1' position is occupied by Gly-|-Yaa.. Together with NTPase and NS4, initiates the formation of the replication complex. Induces the proliferation of the host smooth ER membranes forming long tubular structures. These remodeled membranes probably form the viral factories that contain the replication complex. Its function is as follows. Displays NTPase activity, but no helicase activity. Induces the formation of convoluted membranes derived from the host ER. These remodeled membranes probably form the viral factories that contain the replication complex. Together with NS2 and NS4, initiates the formation of the replication complex. Functionally, probable key protein responsible for the formation of membrane alterations by the virus. Induces the formation of convoluted membranes derived from the host ER. These remodeled membranes probably form the viral factories that contain the replication complex. Together with NS2 and NTPase, initiates the formation of the replication complex. In terms of biological role, viral genome-linked protein is covalently linked to the 5'-end of the positive-strand, negative-strand genomic RNAs and subgenomic RNA. Acts as a genome-linked replication primer. May recruit ribosome to viral RNA thereby promoting viral proteins translation. Interacts with host translation initiation complex to allow the translation of viral proteins. Protease-polymerase p76 processes the polyprotein: Pro-Pol is first released by autocleavage, then all other proteins are cleaved. Cleaves host translation initiation factor eIF4G1, eIF4G2 and PABP1 thereby inducing a shutdown of host protein synthesis. This shutdown may not prevent viral mRNA from being translated since viral Vpg replaces the cap. It is also an RNA-directed RNA polymerase which replicates genomic and antigenomic viral RNA by recognizing specific signals. Also transcribes a subgenomic mRNA by initiating RNA synthesis internally on antigenomic RNA. This sgRNA codes for structural proteins. Catalyzes the covalent attachment VPg with viral RNAs. Its function is as follows. Capsid protein self assembles to form an icosahedral capsid with a T=3 symmetry, about 38 nm in diameter, and consisting of 180 capsid proteins. The capsid encapsulate the genomic RNA and VP2 proteins. Attaches virion to target cells, inducing endocytosis of the viral particle. Acidification of the endosome induces conformational change of capsid protein thereby injecting virus genomic RNA into host cytoplasm. The protein is Genome polyprotein of Sapporo virus (isolate GI/Human/Germany/pJG-Sap01) (Hu/Dresden/pJG-Sap01/DE).